Consider the following 241-residue polypeptide: tRNA (guanine-N(7)-)-methyltransferase B (241 aa).

The S-adenosyl-L-methionine site is built by glycine 61, glutamate 84, arginine 86, asparagine 117, alanine 118, and leucine 137. Aspartate 140 is an active-site residue. The tract at residues 141 to 149 (PHFKKTKHK) is alphaC helix. S-adenosyl-L-methionine-binding residues include threonine 215 and glutamate 217. The segment at 215–223 (TEEGKKVQR) is alpha6 helix.

It belongs to the class I-like SAM-binding methyltransferase superfamily. TrmB family. Catalytic component of the METTL1-WDR4 complex, composed of mettl1 and wdr4.

The protein resides in the nucleus. The catalysed reaction is guanosine(46) in tRNA + S-adenosyl-L-methionine = N(7)-methylguanosine(46) in tRNA + S-adenosyl-L-homocysteine. The enzyme catalyses a guanosine in mRNA + S-adenosyl-L-methionine = an N(7)-methylguanosine in mRNA + S-adenosyl-L-homocysteine. It carries out the reaction a guanosine in miRNA + S-adenosyl-L-methionine = an N(7)-methylguanosine in miRNA + S-adenosyl-L-homocysteine. Its pathway is tRNA modification; N(7)-methylguanine-tRNA biosynthesis. Catalytic component of METTL1-WDR4 methyltransferase complex that mediates the formation of N(7)-methylguanine in a subset of RNA species, such as tRNAs, mRNAs and microRNAs (miRNAs). Catalyzes the formation of N(7)-methylguanine at position 46 (m7G46) in a large subset of tRNAs that contain the 5'-RAGGU-3' motif within the variable loop. M7G46 interacts with C13-G22 in the D-loop to stabilize tRNA tertiary structure and protect tRNAs from decay. Also acts as a methyltransferase for a subset of internal N(7)-methylguanine in mRNAs. Internal N(7)-methylguanine methylation of mRNAs in response to stress promotes their relocalization to stress granules, thereby suppressing their translation. Also methylates a specific subset of miRNAs. This Xenopus tropicalis (Western clawed frog) protein is tRNA (guanine-N(7)-)-methyltransferase B (mettl1-B).